The primary structure comprises 221 residues: MSDGDYDYLIKFLALGDSGVGKTSVLYQYTDGKFNSKFITTVGIDFREKRVVYRANGPDGAIGRGQRIHLQLWDTAGQERFRSLTTAFFRDAMGFLLLFDLTNEQSFLNVRNWISQLQMHAYCENPDIVLCGNKSDLEDQRVVKEEDARGLAEKYGIPYFETSAANGTNISQAIEMLLDLIMKRMERCVDKSWIPEGVVRSNGHTSTDHLNEAKEKGICGC.

The residue at position 2 (serine 2) is an N-acetylserine. Position 2 is a phosphoserine (serine 2). 16 to 24 (GDSGVGKTS) is a GTP binding site. The Effector region signature appears at 38–46 (FITTVGIDF). GTP is bound by residues 74 to 78 (DTAGQ), 133 to 136 (NKSD), and 163 to 165 (SAA). Cysteine 123 and cysteine 188 are disulfide-bonded. 2 S-geranylgeranyl cysteine lipidation sites follow: cysteine 219 and cysteine 221. Position 221 is a cysteine methyl ester (cysteine 221).

This sequence belongs to the small GTPase superfamily. Rab family. Binds SYTL1, SLAC2B, MYRIP, SYTL3, SYTL4 and SYTL5. Interacts with RPH3A and RPH3A. Binds MLPH and SYTL2. Interacts with UNC13D. Does not interact with the BLOC-3 complex (heterodimer of HPS1 and HPS4). Interacts (GDP-bound form preferentially) with DENND10.

Its subcellular location is the membrane. The protein resides in the melanosome. The protein localises to the late endosome. It localises to the lysosome. It catalyses the reaction GTP + H2O = GDP + phosphate + H(+). With respect to regulation, regulated by guanine nucleotide exchange factors (GEFs) which promote the exchange of bound GDP for free GTP, GTPase activating proteins (GAPs) which increase the GTP hydrolysis activity, and GDP dissociation inhibitors which inhibit the dissociation of the nucleotide from the GTPase. Activated by GEFs such as DENND10. Functionally, small GTPase which cycles between active GTP-bound and inactive GDP-bound states. In its active state, binds to a variety of effector proteins to regulate homeostasis of late endocytic pathway, including endosomal positioning, maturation and secretion. Plays a role in cytotoxic granule exocytosis in lymphocytes. Required for both granule maturation and granule docking and priming at the immunologic synapse. This is Ras-related protein Rab-27A (RAB27A) from Canis lupus familiaris (Dog).